Reading from the N-terminus, the 479-residue chain is M-phase inducer phosphatase (479 aa).

Residues 182-218 are disordered; sequence MTESNTNSTTTPPPKTPETARDCFKRPEPPASANCSP. The segment covering 199-209 has biased composition (basic and acidic residues); the sequence is ETARDCFKRPE. The 117-residue stretch at 316 to 432 folds into the Rhodanese domain; sequence KVASYRIIDC…FFESHVELCE (117 aa). Cysteine 379 is an active-site residue. Phosphoserine is present on serine 455.

It belongs to the MPI phosphatase family.

The catalysed reaction is O-phospho-L-tyrosyl-[protein] + H2O = L-tyrosyl-[protein] + phosphate. Functionally, this protein functions as a dosage-dependent inducer in mitotic control. It is a tyrosine protein phosphatase required for progression of the cell cycle. It may directly dephosphorylate Cdk1 and activate the Cdk1 activity. This is M-phase inducer phosphatase (stg) from Drosophila melanogaster (Fruit fly).